A 369-amino-acid polypeptide reads, in one-letter code: tRNA/tmRNA (uracil-C(5))-methyltransferase (369 aa).

Gln193, Tyr221, Asn226, Glu242, and Asp302 together coordinate S-adenosyl-L-methionine. Cys327 (nucleophile) is an active-site residue. Residue Glu361 is the Proton acceptor of the active site.

Belongs to the class I-like SAM-binding methyltransferase superfamily. RNA M5U methyltransferase family. TrmA subfamily.

It catalyses the reaction uridine(54) in tRNA + S-adenosyl-L-methionine = 5-methyluridine(54) in tRNA + S-adenosyl-L-homocysteine + H(+). The enzyme catalyses uridine(341) in tmRNA + S-adenosyl-L-methionine = 5-methyluridine(341) in tmRNA + S-adenosyl-L-homocysteine + H(+). In terms of biological role, dual-specificity methyltransferase that catalyzes the formation of 5-methyluridine at position 54 (m5U54) in all tRNAs, and that of position 341 (m5U341) in tmRNA (transfer-mRNA). The polypeptide is tRNA/tmRNA (uracil-C(5))-methyltransferase (Actinobacillus succinogenes (strain ATCC 55618 / DSM 22257 / CCUG 43843 / 130Z)).